The primary structure comprises 208 residues: ATP phosphoribosyltransferase (208 aa).

This sequence belongs to the ATP phosphoribosyltransferase family. Short subfamily. As to quaternary structure, heteromultimer composed of HisG and HisZ subunits.

Its subcellular location is the cytoplasm. It catalyses the reaction 1-(5-phospho-beta-D-ribosyl)-ATP + diphosphate = 5-phospho-alpha-D-ribose 1-diphosphate + ATP. It functions in the pathway amino-acid biosynthesis; L-histidine biosynthesis; L-histidine from 5-phospho-alpha-D-ribose 1-diphosphate: step 1/9. Its function is as follows. Catalyzes the condensation of ATP and 5-phosphoribose 1-diphosphate to form N'-(5'-phosphoribosyl)-ATP (PR-ATP). Has a crucial role in the pathway because the rate of histidine biosynthesis seems to be controlled primarily by regulation of HisG enzymatic activity. The polypeptide is ATP phosphoribosyltransferase (Thermotoga neapolitana (strain ATCC 49049 / DSM 4359 / NBRC 107923 / NS-E)).